The sequence spans 257 residues: Pyrroline-5-carboxylate reductase (257 aa).

This sequence belongs to the pyrroline-5-carboxylate reductase family.

The protein resides in the cytoplasm. The enzyme catalyses L-proline + NADP(+) = (S)-1-pyrroline-5-carboxylate + NADPH + 2 H(+). The catalysed reaction is L-proline + NAD(+) = (S)-1-pyrroline-5-carboxylate + NADH + 2 H(+). It functions in the pathway amino-acid biosynthesis; L-proline biosynthesis; L-proline from L-glutamate 5-semialdehyde: step 1/1. Functionally, catalyzes the reduction of 1-pyrroline-5-carboxylate (PCA) to L-proline. The sequence is that of Pyrroline-5-carboxylate reductase from Helicobacter pylori (strain J99 / ATCC 700824) (Campylobacter pylori J99).